Consider the following 834-residue polypeptide: Kinesin-like protein KIF18B (834 aa).

The Kinesin motor domain maps to 9-353; that stretch reads VVRVVVRVRP…LKYADRAKEI (345 aa). 111–118 contacts ATP; that stretch reads GATGAGKT. Residues 368–404 adopt a coiled-coil conformation; sequence ISQYATICQQLQAEVAFLREKLQMYEAGAQALQQQCS. Disordered stretches follow at residues 400–508, 602–642, 655–686, and 800–834; these read QQQC…ADHS, LGAP…NLEM, RGSL…RVCP, and KKPN…TESY. A compositionally biased stretch (low complexity) spans 411-432; sequence SIPQSLSSSSLQPGPSSQSSTL. Phosphothreonine is present on threonine 431. The span at 462 to 474 shows a compositional bias: polar residues; the sequence is EQEQCPQDKQCPT. Serine 484 bears the Phosphoserine mark. Residues 611–620 are compositionally biased toward basic and acidic residues; it reads TSDKTFQKPT. The Nuclear localization signal signature appears at 619-627; that stretch reads PTKEKKRKL. Residues serine 634 and serine 657 each carry the phosphoserine modification. Threonine 669 bears the Phosphothreonine mark. The residue at position 814 (serine 814) is a Phosphoserine.

The protein belongs to the TRAFAC class myosin-kinesin ATPase superfamily. Kinesin family. As to quaternary structure, interacts with MAPRE1; this interaction is required for efficient accumulation at microtubule plus ends. Interacts with KIF2C at microtubule tips; this interaction increases the affinity of both partners for microtubule plus ends and is required for robust microtubule depolymerization. KIF2C phosphorylation by AURKA or AURKB strongly reduces KIF18B-binding.

The protein resides in the nucleus. It is found in the cytoplasm. The protein localises to the cytoskeleton. In terms of biological role, in complex with KIF2C, constitutes the major microtubule plus-end depolymerizing activity in mitotic cells. Its major role may be to transport KIF2C and/or MAPRE1 along microtubules. This is Kinesin-like protein KIF18B (Kif18b) from Mus musculus (Mouse).